Here is a 155-residue protein sequence, read N- to C-terminus: Ribosome maturation factor RimP (155 aa).

It belongs to the RimP family.

The protein localises to the cytoplasm. Required for maturation of 30S ribosomal subunits. This chain is Ribosome maturation factor RimP, found in Listeria innocua serovar 6a (strain ATCC BAA-680 / CLIP 11262).